A 1158-amino-acid polypeptide reads, in one-letter code: ATP-dependent helicase/deoxyribonuclease subunit B (1158 aa).

8–15 contributes to the ATP binding site; it reads GRAGTGKS. [4Fe-4S] cluster is bound by residues Cys-791, Cys-1112, Cys-1115, and Cys-1121.

It belongs to the helicase family. AddB/RexB type 1 subfamily. Heterodimer of AddA and AddB. Mg(2+) serves as cofactor. Requires [4Fe-4S] cluster as cofactor.

In terms of biological role, the heterodimer acts as both an ATP-dependent DNA helicase and an ATP-dependent, dual-direction single-stranded exonuclease. Recognizes the chi site generating a DNA molecule suitable for the initiation of homologous recombination. The AddB subunit has 5' -&gt; 3' nuclease activity but not helicase activity. The protein is ATP-dependent helicase/deoxyribonuclease subunit B of Clostridium perfringens (strain ATCC 13124 / DSM 756 / JCM 1290 / NCIMB 6125 / NCTC 8237 / Type A).